A 335-amino-acid chain; its full sequence is Mitochondrial amidoxime reducing component 2 (335 aa).

The N-terminal 35 residues, methionine 1–leucine 35, are a transit peptide targeting the mitochondrion. Residues lysine 59, lysine 138, and lysine 144 each participate in a glycyl lysine isopeptide (Lys-Gly) (interchain with G-Cter in ubiquitin) cross-link. At lysine 156 the chain carries N6-acetyllysine; alternate. Lysine 156 participates in a covalent cross-link: Glycyl lysine isopeptide (Lys-Gly) (interchain with G-Cter in ubiquitin); alternate. Residues lysine 173, lysine 187, lysine 287, and lysine 294 each participate in a glycyl lysine isopeptide (Lys-Gly) (interchain with G-Cter in ubiquitin) cross-link. The MOSC domain occupies glycine 188–methionine 334.

In terms of assembly, component of a complex composed of cytochrome b5, NADH-cytochrome b5 reductase (CYB5R3) and MTARC2. Mo-molybdopterin is required as a cofactor. Post-translationally, ubiquitinated by PRKN during mitophagy, leading to its degradation and enhancement of mitophagy. Deubiquitinated by USP30.

The protein localises to the mitochondrion outer membrane. It is found in the peroxisome. It catalyses the reaction N(omega)-hydroxy-L-arginine + 2 Fe(II)-[cytochrome b5] + 2 H(+) = L-arginine + 2 Fe(III)-[cytochrome b5] + H2O. In terms of biological role, catalyzes the reduction of N-oxygenated molecules, acting as a counterpart of cytochrome P450 and flavin-containing monooxygenases in metabolic cycles. As a component of prodrug-converting system, reduces a multitude of N-hydroxylated prodrugs particularly amidoximes, leading to increased drug bioavailability. May be involved in mitochondrial N(omega)-hydroxy-L-arginine (NOHA) reduction, regulating endogenous nitric oxide levels and biosynthesis. Postulated to cleave the N-OH bond of N-hydroxylated substrates in concert with electron transfer from NADH to cytochrome b5 reductase then to cytochrome b5, the ultimate electron donor that primes the active site for substrate reduction. The protein is Mitochondrial amidoxime reducing component 2 (MTARC2) of Macaca fascicularis (Crab-eating macaque).